The sequence spans 649 residues: PTS system mannitol-specific EIICBA component (649 aa).

The PTS EIIC type-2 domain occupies 13–342 (FGRFLSNMVM…LLMKAQTSTE (330 aa)). The next 6 helical transmembrane spans lie at 25 to 46 (IGAF…WVPN), 51 to 71 (SLVG…TGGK), 135 to 156 (SAGI…PFVK), 166 to 186 (VNFL…EPAK), 274 to 293 (AIAG…AGLV), and 314 to 335 (LGVV…ALLM). Residues 384–475 (QSIIVACDAG…LVTQLLAAKR (92 aa)) form the PTS EIIB type-2 domain. Cys-390 serves as the catalytic Phosphocysteine intermediate; for EIIB activity. The residue at position 390 (Cys-390) is a Phosphocysteine; by EIIA. Residues 504–646 (FQLQKENIHL…SDVLSILATS (143 aa)) form the PTS EIIA type-2 domain. Catalysis depends on His-564, which acts as the Tele-phosphohistidine intermediate; for EIIA activity. At His-564 the chain carries Phosphohistidine; by HPr.

As to quaternary structure, homodimer. In terms of processing, an intramolecular phosphotransfer takes places between His-564 and Cys-390.

It is found in the cell inner membrane. The catalysed reaction is D-mannitol(out) + N(pros)-phospho-L-histidyl-[protein] = D-mannitol 1-phosphate(in) + L-histidyl-[protein]. Functionally, the phosphoenolpyruvate-dependent sugar phosphotransferase system (sugar PTS), a major carbohydrate active transport system, catalyzes the phosphorylation of incoming sugar substrates concomitantly with their translocation across the cell membrane. This system is involved in D-mannitol transport. The chain is PTS system mannitol-specific EIICBA component (mtlA) from Vibrio cholerae serotype O1 (strain ATCC 39315 / El Tor Inaba N16961).